Here is a 141-residue protein sequence, read N- to C-terminus: Large ribosomal subunit protein uL22 (141 aa).

Belongs to the universal ribosomal protein uL22 family. Part of the 50S ribosomal subunit.

Its function is as follows. This protein binds specifically to 23S rRNA; its binding is stimulated by other ribosomal proteins, e.g. L4, L17, and L20. It is important during the early stages of 50S assembly. It makes multiple contacts with different domains of the 23S rRNA in the assembled 50S subunit and ribosome. Functionally, the globular domain of the protein is located near the polypeptide exit tunnel on the outside of the subunit, while an extended beta-hairpin is found that lines the wall of the exit tunnel in the center of the 70S ribosome. The chain is Large ribosomal subunit protein uL22 from Frankia alni (strain DSM 45986 / CECT 9034 / ACN14a).